The primary structure comprises 96 residues: Large ribosomal subunit protein bL27 (96 aa).

The propeptide occupies 1–10; that stretch reads MLLKLNIQLF.

The protein belongs to the bacterial ribosomal protein bL27 family. Post-translationally, the N-terminus is cleaved by ribosomal processing cysteine protease Prp.

The protein is Large ribosomal subunit protein bL27 of Phytoplasma mali (strain AT).